Consider the following 114-residue polypeptide: Iron-sulfur cluster insertion protein ErpA (114 aa).

Residues Cys42, Cys106, and Cys108 each contribute to the iron-sulfur cluster site.

Belongs to the HesB/IscA family. As to quaternary structure, homodimer. Requires iron-sulfur cluster as cofactor.

Functionally, required for insertion of 4Fe-4S clusters for at least IspG. The protein is Iron-sulfur cluster insertion protein ErpA of Enterobacter sp. (strain 638).